The chain runs to 738 residues: Polyribonucleotide nucleotidyltransferase (738 aa).

Residues D487 and D493 each contribute to the Mg(2+) site. One can recognise a KH domain in the interval P554–I613. In terms of domain architecture, S1 motif spans G623–K691. The segment at E704–N738 is disordered.

It belongs to the polyribonucleotide nucleotidyltransferase family. It depends on Mg(2+) as a cofactor.

It is found in the cytoplasm. It catalyses the reaction RNA(n+1) + phosphate = RNA(n) + a ribonucleoside 5'-diphosphate. Involved in mRNA degradation. Catalyzes the phosphorolysis of single-stranded polyribonucleotides processively in the 3'- to 5'-direction. The sequence is that of Polyribonucleotide nucleotidyltransferase from Exiguobacterium sp. (strain ATCC BAA-1283 / AT1b).